The primary structure comprises 98 residues: MKTIFVFLTLAVLVSSFFKKLFLRASNIMIKSISEGKSQFSGPALSPNIDPADEHIGHSPEDMKIIFCQQCAFHCIEKKKNIAHCENSICRCTLEDIL.

The signal sequence occupies residues 1–16 (MKTIFVFLTLAVLVSS). Cystine bridges form between cysteine 68-cysteine 85, cysteine 71-cysteine 90, and cysteine 75-cysteine 92.

The protein belongs to the DEFL family.

Its subcellular location is the secreted. The protein is Defensin-like protein 219 of Arabidopsis thaliana (Mouse-ear cress).